Reading from the N-terminus, the 367-residue chain is Pectate trisaccharide-lyase (367 aa).

The N-terminal stretch at 1–27 (MLMRFSRVVSLVLLLVFTAVLTGAVKA) is a signal peptide. Aspartate 144, aspartate 166, and aspartate 170 together coordinate Ca(2+). The PbH1 1 repeat unit spans residues 151–173 (SHHIWIDHCTFVNGNDGAVDIKK). Arginine 224 is a catalytic residue. The PbH1 2 repeat unit spans residues 263 to 289 (GAKVHVEGNYFMGYGAVMAEAGIAFLP).

It belongs to the polysaccharide lyase 1 family. As to quaternary structure, homotetramer. Requires Ca(2+) as cofactor.

It localises to the secreted. It carries out the reaction eliminative cleavage of unsaturated trigalacturonate as the major product from the reducing end of polygalacturonic acid/pectate.. Its activity is regulated as follows. Completely inactivated by EGTA. Functionally, cleaves unsaturated trigalacturonate from pectin. Activity is highest towards polygalacturonic acid, activity on methylated pectins decreases with an increasing degree of methylation. This Thermotoga maritima (strain ATCC 43589 / DSM 3109 / JCM 10099 / NBRC 100826 / MSB8) protein is Pectate trisaccharide-lyase.